The following is a 405-amino-acid chain: MTTTSVCPFSKAARPDDGSTRKQGEITASGCPFSKAARPDDASARKQGETTASGCPFSKSARPDENGSKGCPEQEGNLNKDSTDSATVPAKCPFGYDSQTFKLGPFSCMLCQALLYESSRCVPCTHVFCKVCLTRFKDCPLCGADIESIEVDENLQKMVDQFIEGHARIKRSVVNGTEKEEVENDNKKVIYADVSMERGSFLVQQAMRAFSAQNYESAKSRLAMCTEDIRDQLGREGNTPELCSQLGAVLGMLGDCSRAMGDSSSAVKHFEESVEFLMKLPLNDLEITHTLSVSLNKIGDLKYYDEDLQAARSYYDRALNVRRDAMKHHPNAPSQILDVAVSLAKVADIDRTLQNEVAATDGFKEGMRLLESLKLDSEDSALEQRRLSVLEFLKKQVETDAETAL.

The disordered stretch occupies residues 1 to 85 (MTTTSVCPFS…GNLNKDSTDS (85 aa)). 2 stretches are compositionally biased toward basic and acidic residues: residues 13-24 (ARPDDGSTRKQG) and 37-48 (ARPDDASARKQG). Residues 76–85 (GNLNKDSTDS) show a composition bias toward polar residues. The segment at 108–142 (CMLCQALLYESSRCVPCTHVFCKVCLTRFKDCPLC) adopts an RING-type zinc-finger fold. TPR repeat units lie at residues 247–280 (GAVL…LMKL) and 292–325 (SVSL…RRDA).

In terms of assembly, interacts with the catalases CAT1, CAT2 and CAT3. This interaction is not induced by alkaline stress or H(2)O(2) and NaCl treatments. As to expression, expressed in roots, stems, leaves, flowers and siliques.

It localises to the cytoplasm. Its subcellular location is the nucleus. Functionally, has holdase chaperone activity that may fold catalase to a functional structure. Not required for the peroxisome import of catalases. Required for the activity of catalases and acts mainly at the post-transcriptional level. This Arabidopsis thaliana (Mouse-ear cress) protein is Protein NCA1.